Reading from the N-terminus, the 549-residue chain is Fumarate hydratase 1, mitochondrial (549 aa).

C114 provides a ligand contact to [4Fe-4S] cluster. (S)-malate contacts are provided by residues 115–116 (QD), R154, G197, and 200–206 (NKSFLLQ). Residues C233 and C328 each coordinate [4Fe-4S] cluster. (S)-malate contacts are provided by residues R404, 450–454 (TTAGR), and K474.

The protein belongs to the class-I fumarase family. In terms of assembly, homodimer. Requires [4Fe-4S] cluster as cofactor.

It is found in the mitochondrion. It catalyses the reaction (S)-malate = fumarate + H2O. Its pathway is carbohydrate metabolism; tricarboxylic acid cycle; (S)-malate from fumarate: step 1/1. With respect to regulation, specifically and competitively inhibited by 2-thiomalate, which coordinates with the catalytic [4Fe-4S] cluster. Catalyzes the reversible hydration of fumarate to (S)-malate. Catalyzes the hydration of fumarate to L-malate in the tricarboxylic acid (TCA) cycle to facilitate a transition step in the production of energy in the form of NADH. The polypeptide is Fumarate hydratase 1, mitochondrial (Leishmania major).